The chain runs to 815 residues: 1,4-alpha-glucan branching enzyme GlgB (815 aa).

Asp-405 serves as the catalytic Nucleophile. Glu-458 serves as the catalytic Proton donor.

Belongs to the glycosyl hydrolase 13 family. GlgB subfamily. As to quaternary structure, monomer.

It carries out the reaction Transfers a segment of a (1-&gt;4)-alpha-D-glucan chain to a primary hydroxy group in a similar glucan chain.. The protein operates within glycan biosynthesis; glycogen biosynthesis. In terms of biological role, catalyzes the formation of the alpha-1,6-glucosidic linkages in glycogen by scission of a 1,4-alpha-linked oligosaccharide from growing alpha-1,4-glucan chains and the subsequent attachment of the oligosaccharide to the alpha-1,6 position. This chain is 1,4-alpha-glucan branching enzyme GlgB, found in Histophilus somni (strain 2336) (Haemophilus somnus).